A 239-amino-acid polypeptide reads, in one-letter code: 2-C-methyl-D-erythritol 4-phosphate cytidylyltransferase (239 aa).

This sequence belongs to the IspD/TarI cytidylyltransferase family. IspD subfamily.

It catalyses the reaction 2-C-methyl-D-erythritol 4-phosphate + CTP + H(+) = 4-CDP-2-C-methyl-D-erythritol + diphosphate. It participates in isoprenoid biosynthesis; isopentenyl diphosphate biosynthesis via DXP pathway; isopentenyl diphosphate from 1-deoxy-D-xylulose 5-phosphate: step 2/6. Catalyzes the formation of 4-diphosphocytidyl-2-C-methyl-D-erythritol from CTP and 2-C-methyl-D-erythritol 4-phosphate (MEP). The protein is 2-C-methyl-D-erythritol 4-phosphate cytidylyltransferase of Acidobacterium capsulatum (strain ATCC 51196 / DSM 11244 / BCRC 80197 / JCM 7670 / NBRC 15755 / NCIMB 13165 / 161).